Reading from the N-terminus, the 108-residue chain is UPF0145 protein Acel_2109 (108 aa).

It belongs to the UPF0145 family.

This chain is UPF0145 protein Acel_2109, found in Acidothermus cellulolyticus (strain ATCC 43068 / DSM 8971 / 11B).